The sequence spans 366 residues: Ribosomal RNA small subunit methyltransferase H 1 (366 aa).

The segment at 1-46 is disordered; it reads MADQNINKNEKVLTGQPTENQEPVHKRRERYKGTHPKTFKEKYKER. The span at 25–37 shows a compositional bias: basic residues; that stretch reads HKRRERYKGTHPK. Residues 97–99, aspartate 117, phenylalanine 147, aspartate 166, and glutamine 173 contribute to the S-adenosyl-L-methionine site; that span reads GGH.

The protein belongs to the methyltransferase superfamily. RsmH family.

Its subcellular location is the cytoplasm. It carries out the reaction cytidine(1402) in 16S rRNA + S-adenosyl-L-methionine = N(4)-methylcytidine(1402) in 16S rRNA + S-adenosyl-L-homocysteine + H(+). In terms of biological role, specifically methylates the N4 position of cytidine in position 1402 (C1402) of 16S rRNA. This is Ribosomal RNA small subunit methyltransferase H 1 from Lachnoclostridium phytofermentans (strain ATCC 700394 / DSM 18823 / ISDg) (Clostridium phytofermentans).